We begin with the raw amino-acid sequence, 489 residues long: Probable guanine deaminase (489 aa).

Positions 100 and 102 each coordinate Zn(2+). Substrate is bound by residues 102-105, 231-232, 258-261, and Asp348; these read HVSQ, RF, and HLSE. Residues His258 and Asp348 each contribute to the Zn(2+) site.

This sequence belongs to the metallo-dependent hydrolases superfamily. ATZ/TRZ family. The cofactor is Zn(2+).

The protein resides in the cytoplasm. The catalysed reaction is guanine + H2O + H(+) = xanthine + NH4(+). The protein operates within purine metabolism; guanine degradation; xanthine from guanine: step 1/1. Catalyzes the hydrolytic deamination of guanine, producing xanthine and ammonia. This is Probable guanine deaminase (GUD1) from Saccharomyces cerevisiae (strain ATCC 204508 / S288c) (Baker's yeast).